The chain runs to 448 residues: GA-binding protein subunit beta-2 (448 aa).

ANK repeat units follow at residues 5–34 (DLGK…PFTT), 37–66 (LGTS…SRDA), 70–99 (VDRT…DVNA), 103–132 (LKMT…DVHA), and 136–166 (FDKS…QVNV). Position 256 is a phosphoserine (S256). 2 disordered regions span residues 325-354 (EEEE…GNER) and 420-448 (ELEE…TVSS). The segment covering 337–354 (RIGEKTNSVEESKEGNER) has biased composition (basic and acidic residues). Residues 345–395 (VEESKEGNERELLQQQLQEANRRAQEYRHQLLKKEQEAEQYRLKLEAIARQ) adopt a coiled-coil conformation. Positions 428–448 (VTGSAGTTEPHTRVSMATVSS) are enriched in polar residues.

In terms of assembly, heterotetramer of two alpha and two beta subunits. The C-terminal is necessary for the formation of a heterotetrameric GABP-alpha-2/beta-2 complex, and also facilitates homotypic dimerization. Interacts with ADGRB2.

The protein localises to the nucleus. Its function is as follows. May function as transcription factor capable of interacting with purine rich repeats (GA repeats). In Homo sapiens (Human), this protein is GA-binding protein subunit beta-2 (GABPB2).